The following is a 297-amino-acid chain: Non-structural protein VP10 (297 aa).

The chain is Non-structural protein VP10 from Oryza latifolia (Indian wild rice).